A 638-amino-acid chain; its full sequence is Chaperone protein DnaK (638 aa).

Phosphothreonine; by autocatalysis is present on T198. The segment at 599-638 (IYESQQAEGGAEGGPSGHHDDGIVDADYEEVKDDNTKKSA) is disordered. Over residues 621–630 (IVDADYEEVK) the composition is skewed to acidic residues.

Belongs to the heat shock protein 70 family.

In terms of biological role, acts as a chaperone. The sequence is that of Chaperone protein DnaK from Allorhizobium ampelinum (strain ATCC BAA-846 / DSM 112012 / S4) (Agrobacterium vitis (strain S4)).